The primary structure comprises 786 residues: Phenylalanine--tRNA ligase beta subunit (786 aa).

The tRNA-binding domain maps to 39–150 (LRAPDRVVVG…GELKLGKPLH (112 aa)). One can recognise a B5 domain in the interval 397-474 (YKPATITVDL…RLLGIDTILA (78 aa)). 4 residues coordinate Mg(2+): D452, D458, E461, and E462. Residues 693–786 (SKFPKLQRDL…LNHRFGAKLR (94 aa)) enclose the FDX-ACB domain.

It belongs to the phenylalanyl-tRNA synthetase beta subunit family. Type 1 subfamily. In terms of assembly, tetramer of two alpha and two beta subunits. Mg(2+) is required as a cofactor.

It is found in the cytoplasm. The enzyme catalyses tRNA(Phe) + L-phenylalanine + ATP = L-phenylalanyl-tRNA(Phe) + AMP + diphosphate + H(+). The protein is Phenylalanine--tRNA ligase beta subunit of Wolinella succinogenes (strain ATCC 29543 / DSM 1740 / CCUG 13145 / JCM 31913 / LMG 7466 / NCTC 11488 / FDC 602W) (Vibrio succinogenes).